The chain runs to 149 residues: Arginine repressor (149 aa).

The protein belongs to the ArgR family.

Its subcellular location is the cytoplasm. It participates in amino-acid biosynthesis; L-arginine biosynthesis [regulation]. Regulates arginine biosynthesis genes. The polypeptide is Arginine repressor (Oceanobacillus iheyensis (strain DSM 14371 / CIP 107618 / JCM 11309 / KCTC 3954 / HTE831)).